A 717-amino-acid chain; its full sequence is Patatin-like phospholipase domain-containing protein PGUG_03164 (717 aa).

The chain crosses the membrane as a helical span at residues 123-143 (WPFLIIITVWILLLCILYTVV). Positions 298 to 490 (LCLSGGACFA…RTDIPIDALK (193 aa)) constitute a PNPLA domain. The GXSXG signature appears at 329–333 (GTSGG). Serine 331 serves as the catalytic Nucleophile. The active-site Proton acceptor is the aspartate 477. Residues 680 to 717 (YDSESSAEETLSPGFSQGTHAVLTDESDDDSSDDEIDD) are disordered. A compositionally biased stretch (acidic residues) spans 704–717 (DESDDDSSDDEIDD).

Belongs to the PLPL family.

It localises to the membrane. Functionally, probable lipid hydrolase. In Meyerozyma guilliermondii (strain ATCC 6260 / CBS 566 / DSM 6381 / JCM 1539 / NBRC 10279 / NRRL Y-324) (Yeast), this protein is Patatin-like phospholipase domain-containing protein PGUG_03164.